The primary structure comprises 280 residues: UDP-3-O-acyl-N-acetylglucosamine deacetylase (280 aa).

Zn(2+)-binding residues include His-77, His-238, and Asp-242. The active-site Proton donor is His-265.

The protein belongs to the LpxC family. The cofactor is Zn(2+).

It carries out the reaction a UDP-3-O-[(3R)-3-hydroxyacyl]-N-acetyl-alpha-D-glucosamine + H2O = a UDP-3-O-[(3R)-3-hydroxyacyl]-alpha-D-glucosamine + acetate. It participates in glycolipid biosynthesis; lipid IV(A) biosynthesis; lipid IV(A) from (3R)-3-hydroxytetradecanoyl-[acyl-carrier-protein] and UDP-N-acetyl-alpha-D-glucosamine: step 2/6. In terms of biological role, catalyzes the hydrolysis of UDP-3-O-myristoyl-N-acetylglucosamine to form UDP-3-O-myristoylglucosamine and acetate, the committed step in lipid A biosynthesis. In Nostoc sp. (strain PCC 7120 / SAG 25.82 / UTEX 2576), this protein is UDP-3-O-acyl-N-acetylglucosamine deacetylase.